The chain runs to 420 residues: UDP-N-acetylglucosamine 1-carboxyvinyltransferase (420 aa).

22–23 provides a ligand contact to phosphoenolpyruvate; the sequence is KN. Arg-91 lines the UDP-N-acetyl-alpha-D-glucosamine pocket. Cys-115 acts as the Proton donor in catalysis. A 2-(S-cysteinyl)pyruvic acid O-phosphothioketal modification is found at Cys-115. UDP-N-acetyl-alpha-D-glucosamine-binding positions include 120 to 124, 160 to 163, Asp-305, and Ile-327; these read RPVDL and KVSV.

It belongs to the EPSP synthase family. MurA subfamily.

It is found in the cytoplasm. It carries out the reaction phosphoenolpyruvate + UDP-N-acetyl-alpha-D-glucosamine = UDP-N-acetyl-3-O-(1-carboxyvinyl)-alpha-D-glucosamine + phosphate. Its pathway is cell wall biogenesis; peptidoglycan biosynthesis. Its function is as follows. Cell wall formation. Adds enolpyruvyl to UDP-N-acetylglucosamine. This Pectobacterium carotovorum subsp. carotovorum (strain PC1) protein is UDP-N-acetylglucosamine 1-carboxyvinyltransferase.